The sequence spans 128 residues: uncharacterized protein (128 aa).

A run of 3 helical transmembrane segments spans residues 19–41 (MAIVTNTPIWVWCVLLCLLYVGS), 54–71 (LTFLPLIFLPIVIMSIMQ), and 75–97 (PLIAGFGFIVGLALGLFFRVDNL).

The protein resides in the cell membrane. This is an uncharacterized protein from Pasteurella multocida (strain Pm70).